The primary structure comprises 55 residues: uncharacterized protein (55 aa).

Residues 27-47 form a helical membrane-spanning segment; the sequence is IFLIYHFSPIYCPYLFLFTVF.

The protein resides in the membrane. This is an uncharacterized protein from Acheta domesticus (House cricket).